The chain runs to 310 residues: Haloalkane dehalogenase (310 aa).

Residues 30–140 (PVVLFLHGNP…PMPTWQDFHH (111 aa)) enclose the AB hydrolase-1 domain. Asp-103 acts as the Nucleophile in catalysis. The active-site Proton donor is Glu-127. The active-site Proton acceptor is the His-280.

Belongs to the haloalkane dehalogenase family. Type 2 subfamily. Monomer.

The catalysed reaction is 1-haloalkane + H2O = a halide anion + a primary alcohol + H(+). Catalyzes hydrolytic cleavage of carbon-halogen bonds in halogenated aliphatic compounds, leading to the formation of the corresponding primary alcohols, halide ions and protons. The sequence is that of Haloalkane dehalogenase from Bradyrhizobium diazoefficiens (strain JCM 10833 / BCRC 13528 / IAM 13628 / NBRC 14792 / USDA 110).